The chain runs to 287 residues: 4-diphosphocytidyl-2-C-methyl-D-erythritol kinase (287 aa).

Lysine 11 is a catalytic residue. 93-103 serves as a coordination point for ATP; the sequence is PFGAGLGGGSS. The active site involves aspartate 135.

This sequence belongs to the GHMP kinase family. IspE subfamily.

The catalysed reaction is 4-CDP-2-C-methyl-D-erythritol + ATP = 4-CDP-2-C-methyl-D-erythritol 2-phosphate + ADP + H(+). It participates in isoprenoid biosynthesis; isopentenyl diphosphate biosynthesis via DXP pathway; isopentenyl diphosphate from 1-deoxy-D-xylulose 5-phosphate: step 3/6. Catalyzes the phosphorylation of the position 2 hydroxy group of 4-diphosphocytidyl-2C-methyl-D-erythritol. The chain is 4-diphosphocytidyl-2-C-methyl-D-erythritol kinase from Pelodictyon phaeoclathratiforme (strain DSM 5477 / BU-1).